Reading from the N-terminus, the 367-residue chain is F-box only protein 25 (367 aa).

The tract at residues 1–83 (MPFLGQDWRS…NDTNTQSFYR (83 aa)) is interaction with beta-actin. An F-box domain is found at 226-274 (LTLSDLPLHMLNNILYRFSDGWDIITLGQVTPTLYMLSEDRQLWKKLCQ).

As to quaternary structure, part of a SCF (SKP1-cullin-F-box) protein ligase complex consisting of FBXO25, SKP1, CUL1 and RBX1. Interacts directly with SKP1 and CUL1. Interacts (via C-terminus) with beta-actin (via N-terminus). Expressed in all brain tissue observed.

It localises to the nucleus. It participates in protein modification; protein ubiquitination. Substrate-recognition component of the SCF (SKP1-CUL1-F-box protein)-type E3 ubiquitin ligase complex. May play a role in accumulation of expanded polyglutamine (polyQ) protein huntingtin (HTT). The polypeptide is F-box only protein 25 (FBXO25) (Homo sapiens (Human)).